The chain runs to 738 residues: Isocitrate dehydrogenase [NADP] (738 aa).

Residues asparagine 83 and serine 85 each coordinate NADP(+). 5 residues coordinate D-threo-isocitrate: serine 130, asparagine 133, arginine 137, arginine 143, and lysine 253. Asparagine 133 provides a ligand contact to NADP(+). Aspartate 346 is a binding site for Mg(2+). The D-threo-isocitrate site is built by tyrosine 416 and arginine 543. Residues aspartate 544 and aspartate 548 each contribute to the Mg(2+) site. NADP(+) is bound by residues glycine 580, histidine 585, arginine 596, aspartate 598, and arginine 645.

Belongs to the monomeric-type IDH family. Monomer. Mg(2+) serves as cofactor. Requires Mn(2+) as cofactor.

It is found in the cytoplasm. It carries out the reaction D-threo-isocitrate + NADP(+) = 2-oxoglutarate + CO2 + NADPH. With respect to regulation, weakly inhibited by oxaloacetate, 2-oxoglutarate and citrate. Severely inhibited by oxaloacetate plus glyoxylate. Functionally, catalyzes the oxidative decarboxylation of isocitrate to 2-oxoglutarate and carbon dioxide with the concomitant reduction of NADP(+). Cannot use NAD(+). This chain is Isocitrate dehydrogenase [NADP], found in Corynebacterium glutamicum (strain ATCC 13032 / DSM 20300 / JCM 1318 / BCRC 11384 / CCUG 27702 / LMG 3730 / NBRC 12168 / NCIMB 10025 / NRRL B-2784 / 534).